The following is a 92-amino-acid chain: MSRSLKKGPYIEYKLLKKIEELNKQEAKKTLKTWSRSSTIIPQMIGHTIAVYNGKQFFPVFISDQMVGHKLGEFVPTRNFRSHVKSDRKTKR.

This sequence belongs to the universal ribosomal protein uS19 family.

Its subcellular location is the plastid. It localises to the chloroplast. Its function is as follows. Protein S19 forms a complex with S13 that binds strongly to the 16S ribosomal RNA. The protein is Small ribosomal subunit protein uS19c of Gracilaria tenuistipitata var. liui (Red alga).